Reading from the N-terminus, the 101-residue chain is Ribonuclease P protein component 1 (101 aa).

Belongs to the eukaryotic/archaeal RNase P protein component 1 family. In terms of assembly, consists of a catalytic RNA component and at least 4-5 protein subunits.

The protein resides in the cytoplasm. It carries out the reaction Endonucleolytic cleavage of RNA, removing 5'-extranucleotides from tRNA precursor.. Functionally, part of ribonuclease P, a protein complex that generates mature tRNA molecules by cleaving their 5'-ends. The polypeptide is Ribonuclease P protein component 1 (Methanococcoides burtonii (strain DSM 6242 / NBRC 107633 / OCM 468 / ACE-M)).